Reading from the N-terminus, the 317-residue chain is Protein phosphatase 1 regulatory subunit 3C (317 aa).

The PP1-binding motif signature appears at 84 to 87 (RVVF). The tract at residues 141-263 (PSSDYLSFRD…YRIVHVQWKP (123 aa)) is interaction with EPM2A. The CBM21 domain occupies 149 to 257 (RDRFQKNFVC…NNEAQNYRIV (109 aa)).

In terms of assembly, interacts with PPP1CC catalytic subunit of PP1 and associates with glycogen. Forms complexes with glycogen phosphorylase, glycogen synthase and phosphorylase kinase which is necessary for its regulation of PP1 activity. Also interacts with EPM2A/laforin. Post-translationally, ubiquitinated by NHLRC1/malin in a EPM2A/laforin-dependent manner.

Acts as a glycogen-targeting subunit for PP1 and regulates its activity. Activates glycogen synthase, reduces glycogen phosphorylase activity and limits glycogen breakdown. Dramatically increases basal and insulin-stimulated glycogen synthesis upon overexpression in a variety of cell types. This is Protein phosphatase 1 regulatory subunit 3C from Rattus norvegicus (Rat).